A 420-amino-acid chain; its full sequence is Serine hydroxymethyltransferase (420 aa).

(6S)-5,6,7,8-tetrahydrofolate-binding positions include Leu-121 and 125–127 (GHL). Position 230 is an N6-(pyridoxal phosphate)lysine (Lys-230). (6S)-5,6,7,8-tetrahydrofolate-binding positions include Glu-246 and 354 to 356 (SPF).

Belongs to the SHMT family. In terms of assembly, homodimer. Pyridoxal 5'-phosphate is required as a cofactor.

The protein localises to the cytoplasm. It carries out the reaction (6R)-5,10-methylene-5,6,7,8-tetrahydrofolate + glycine + H2O = (6S)-5,6,7,8-tetrahydrofolate + L-serine. Its pathway is one-carbon metabolism; tetrahydrofolate interconversion. It functions in the pathway amino-acid biosynthesis; glycine biosynthesis; glycine from L-serine: step 1/1. Functionally, catalyzes the reversible interconversion of serine and glycine with tetrahydrofolate (THF) serving as the one-carbon carrier. This reaction serves as the major source of one-carbon groups required for the biosynthesis of purines, thymidylate, methionine, and other important biomolecules. Also exhibits THF-independent aldolase activity toward beta-hydroxyamino acids, producing glycine and aldehydes, via a retro-aldol mechanism. In Rickettsia typhi (strain ATCC VR-144 / Wilmington), this protein is Serine hydroxymethyltransferase.